Reading from the N-terminus, the 291-residue chain is Urease accessory protein UreD (291 aa).

Belongs to the UreD family. In terms of assembly, ureD, UreF and UreG form a complex that acts as a GTP-hydrolysis-dependent molecular chaperone, activating the urease apoprotein by helping to assemble the nickel containing metallocenter of UreC. The UreE protein probably delivers the nickel.

The protein resides in the cytoplasm. In terms of biological role, required for maturation of urease via the functional incorporation of the urease nickel metallocenter. The chain is Urease accessory protein UreD from Acinetobacter baumannii (strain ACICU).